The sequence spans 326 residues: 4-hydroxythreonine-4-phosphate dehydrogenase (326 aa).

Thr132 serves as a coordination point for substrate. A divalent metal cation is bound by residues His160, His205, and His260. Residues Lys268, Asn277, and Arg286 each coordinate substrate.

This sequence belongs to the PdxA family. As to quaternary structure, homodimer. The cofactor is Zn(2+). Mg(2+) is required as a cofactor. Co(2+) serves as cofactor.

It localises to the cytoplasm. The catalysed reaction is 4-(phosphooxy)-L-threonine + NAD(+) = 3-amino-2-oxopropyl phosphate + CO2 + NADH. It functions in the pathway cofactor biosynthesis; pyridoxine 5'-phosphate biosynthesis; pyridoxine 5'-phosphate from D-erythrose 4-phosphate: step 4/5. In terms of biological role, catalyzes the NAD(P)-dependent oxidation of 4-(phosphooxy)-L-threonine (HTP) into 2-amino-3-oxo-4-(phosphooxy)butyric acid which spontaneously decarboxylates to form 3-amino-2-oxopropyl phosphate (AHAP). This Stenotrophomonas maltophilia (strain R551-3) protein is 4-hydroxythreonine-4-phosphate dehydrogenase.